Consider the following 507-residue polypeptide: Hexokinase-5 (507 aa).

The chain crosses the membrane as a helical span at residues 4 to 24 (AAAVGTAVVVAAAVGVAVVLA). One can recognise a Hexokinase domain in the interval 44-498 (RKVAAVIEDV…SGIGAALLAA (455 aa)). The tract at residues 99–237 (TGNEQGLFYA…GLDMKIAALV (139 aa)) is hexokinase small subdomain. ADP is bound by residues glycine 113, threonine 114, and asparagine 115. Residues threonine 203, lysine 204, asparagine 238, and aspartate 239 each contribute to the D-glucose site. Residues 238 to 487 (NDTVGTLAGG…SSVVTKLAND (250 aa)) form a hexokinase large subdomain region. Threonine 262 serves as a coordination point for ADP. D-glucose contacts are provided by asparagine 265, glutamate 293, and glutamate 324. Glycine 452 provides a ligand contact to ADP.

This sequence belongs to the hexokinase family. As to expression, expressed in roots, leaves, flowers, immature seeds, endosperm and seed coat.

It localises to the plastid. The protein resides in the chloroplast outer membrane. It catalyses the reaction a D-hexose + ATP = a D-hexose 6-phosphate + ADP + H(+). The catalysed reaction is D-fructose + ATP = D-fructose 6-phosphate + ADP + H(+). The enzyme catalyses D-glucose + ATP = D-glucose 6-phosphate + ADP + H(+). It participates in carbohydrate metabolism; hexose metabolism. It functions in the pathway carbohydrate degradation; glycolysis; D-glyceraldehyde 3-phosphate and glycerone phosphate from D-glucose: step 1/4. Fructose and glucose phosphorylating enzyme. Functions as a glucose sensor for plant growth and photosynthesis. Is essential for pollen development, germination, and tube growth. Its activity is necessary for the starch utilization pathway during pollen germination and tube growth, as well as for starch biosynthesis during pollen maturation. The protein is Hexokinase-5 (HXK5) of Oryza sativa subsp. japonica (Rice).